Reading from the N-terminus, the 118-residue chain is MGSRWGIAVLGLFCFVSCLEAITSSPKIQVYSRHPAQIGESNNLNCYVSSFHPPQISIRLLKNGQEMPGVEMSDLSFSNDWTFHRLVHTVFTPSNQDTFECEVVHEGVKKTVKWEPDN.

The first 21 residues, 1–21 (MGSRWGIAVLGLFCFVSCLEA), serve as a signal peptide directing secretion. In terms of domain architecture, Ig-like C1-type spans 26–113 (PKIQVYSRHP…VHEGVKKTVK (88 aa)). A disulfide bond links C46 and C101.

This sequence belongs to the beta-2-microglobulin family. Heterodimer of an alpha chain and a beta chain. Beta-2-microglobulin is the beta-chain of major histocompatibility complex class I molecules.

It is found in the secreted. Functionally, component of the class I major histocompatibility complex (MHC). Involved in the presentation of peptide antigens to the immune system. This chain is Beta-2-microglobulin (B2M), found in Ornithorhynchus anatinus (Duckbill platypus).